Reading from the N-terminus, the 224-residue chain is Lipoprotein-releasing system ATP-binding protein LolD (224 aa).

The 221-residue stretch at 4–224 (YTAKDISKNY…TLLDGSLQEE (221 aa)) folds into the ABC transporter domain. 40 to 47 (GASGSGKT) is an ATP binding site.

It belongs to the ABC transporter superfamily. Lipoprotein translocase (TC 3.A.1.125) family. As to quaternary structure, the complex is composed of two ATP-binding proteins (LolD) and two transmembrane proteins (LolC and LolE).

It localises to the cell inner membrane. Its function is as follows. Part of the ABC transporter complex LolCDE involved in the translocation of mature outer membrane-directed lipoproteins, from the inner membrane to the periplasmic chaperone, LolA. Responsible for the formation of the LolA-lipoprotein complex in an ATP-dependent manner. The sequence is that of Lipoprotein-releasing system ATP-binding protein LolD from Desulfotalea psychrophila (strain LSv54 / DSM 12343).